Reading from the N-terminus, the 314-residue chain is L-lactate dehydrogenase (314 aa).

Residues Val-16, Asp-37, Lys-42, Tyr-68, and 82–83 contribute to the NAD(+) site; that span reads GV. Residues Gln-85 and Arg-91 each contribute to the substrate site. Residues Ser-104, 121-123, and Thr-146 each bind NAD(+); that span reads ASN. 123 to 126 serves as a coordination point for substrate; sequence NPVD. 151–154 contacts substrate; that stretch reads DTTR. The beta-D-fructose 1,6-bisphosphate site is built by Arg-156 and His-171. Residue His-178 is the Proton acceptor of the active site. Residue Tyr-223 is modified to Phosphotyrosine. Thr-232 contacts substrate.

The protein belongs to the LDH/MDH superfamily. LDH family. Homotetramer.

The protein resides in the cytoplasm. It catalyses the reaction (S)-lactate + NAD(+) = pyruvate + NADH + H(+). It participates in fermentation; pyruvate fermentation to lactate; (S)-lactate from pyruvate: step 1/1. Allosterically activated by fructose 1,6-bisphosphate (FBP). Its function is as follows. Catalyzes the conversion of lactate to pyruvate. In Lactococcus lactis subsp. cremoris (strain MG1363), this protein is L-lactate dehydrogenase.